The sequence spans 398 residues: Alpha-2,8-sialyltransferase 8F (398 aa).

Residues 1–3 lie on the Cytoplasmic side of the membrane; that stretch reads MRS. The chain crosses the membrane as a helical; Signal-anchor for type II membrane protein span at residues 4–24; sequence GGTLFALIGSLMLLLLLRMLW. Over 25–398 the chain is Lumenal; the sequence is CPADAPARSR…KLQFSKCETA (374 aa). Asn-66, Asn-93, Asn-151, and Asn-196 each carry an N-linked (GlcNAc...) asparagine glycan. Disulfide bonds link Cys-186-Cys-335 and Cys-200-Cys-395. Substrate-binding positions include Asn-214, 236-238, and 322-324; these read NPS and STG. His-370 serves as the catalytic Proton donor/acceptor.

Belongs to the glycosyltransferase 29 family. In terms of tissue distribution, highly expressed in kidney and expressed and all tissues tested.

It is found in the golgi apparatus membrane. The enzyme catalyses a ganglioside GM3 + CMP-N-acetyl-beta-neuraminate = a ganglioside GD3 + CMP + H(+). It catalyses the reaction a ganglioside GM3 (d18:1(4E)) + CMP-N-acetyl-beta-neuraminate = a ganglioside GD3 (d18:1(4E)) + CMP + H(+). The catalysed reaction is a ganglioside GD1a (d18:1(4E)) + CMP-N-acetyl-beta-neuraminate = a ganglioside GT1a (d18:1(4E)) + CMP + H(+). It carries out the reaction a ganglioside GD1a + CMP-N-acetyl-beta-neuraminate = a ganglioside GT1a + CMP + H(+). The enzyme catalyses a ganglioside GM1b (d18:1(4E)) + CMP-N-acetyl-beta-neuraminate = a ganglioside GD1c (d18:1(4E)) + CMP + H(+). It catalyses the reaction a ganglioside GM1b + CMP-N-acetyl-beta-neuraminate = a ganglioside GD1c + CMP + H(+). The catalysed reaction is a ganglioside GM4 (d18:1(4E)) + CMP-N-acetyl-beta-neuraminate = an N-acetyl-alpha-neuraminosyl-(2-&gt;8)-N-acetyl-alpha-neuraminosyl-(2-&gt;3)-beta-D-galactosyl-(1&lt;-&gt;1')-N-acylsphing-4-enine + CMP + H(+). It carries out the reaction N-acetyl-alpha-neuraminosyl-(2-&gt;3)-beta-D-galactosyl-(1&lt;-&gt;1')-ceramide + CMP-N-acetyl-beta-neuraminate = N-acetyl-alpha-neuraminosyl-(2-&gt;8)-N-acetyl-alpha-neuraminosyl-(2-&gt;3)-beta-D-galactosyl-(1&lt;-&gt;1')-ceramide + CMP + H(+). The enzyme catalyses a ganglioside GT1b (d18:1(4E)) + CMP-N-acetyl-beta-neuraminate = a ganglioside GQ1b (d18:1(4E)) + CMP + H(+). It catalyses the reaction a ganglioside GT1b + CMP-N-acetyl-beta-neuraminate = a ganglioside GQ1b + CMP + H(+). It participates in protein modification; protein glycosylation. In terms of biological role, alpha-2,8-sialyltransferase that prefers O-glycans to N-glycans or glycolipids as acceptor substrates. The minimal acceptor substrate is the NeuAc-alpha-2,3(6)-Gal sequence at the non-reducing end of their carbohydrate groups. The chain is Alpha-2,8-sialyltransferase 8F from Mus musculus (Mouse).